The sequence spans 349 residues: Probable sugar phosphate/phosphate translocator At5g25400 (349 aa).

The next 10 helical transmembrane spans lie at 15 to 35, 49 to 69, 89 to 109, 113 to 133, 141 to 161, 165 to 185, 205 to 225, 236 to 256, 263 to 283, and 286 to 306; these read IIISYTYVAIWIFLSFTVIVY, FPISLTMIHMSFCSTLAFLLI, VVPIGALYSLSLWLSNSAYIY, SFIQMLKALMPVAVYSIGVLF, ETMMNMLSISFGVAIAAYGEA, VWGVILQLGAVAFEATRLVMI, VAPCCLAFLFIPWIVVEFPIL, LIFGTNSFCAFALNLAVFLLV, TMNVAGVVKDWLLIAFSWSVI, and TVTPINLFGYGIAFLGVAYYN. One can recognise an EamA domain in the interval 38 to 156; that stretch reads YILDKKMYDW…LSISFGVAIA (119 aa). The interval 321–349 is disordered; that stretch reads TAQQVDEETGRLLEEREGNEGGRKNEPED. A compositionally biased stretch (basic and acidic residues) spans 328 to 349; the sequence is ETGRLLEEREGNEGGRKNEPED.

Belongs to the TPT transporter family. TPT (TC 2.A.7.9) subfamily.

The protein localises to the membrane. This is Probable sugar phosphate/phosphate translocator At5g25400 from Arabidopsis thaliana (Mouse-ear cress).